The sequence spans 862 residues: DNA mismatch repair protein MutS (862 aa).

Residue 613-620 (GPNMAGKS) participates in ATP binding.

It belongs to the DNA mismatch repair MutS family.

Functionally, this protein is involved in the repair of mismatches in DNA. It is possible that it carries out the mismatch recognition step. This protein has a weak ATPase activity. This chain is DNA mismatch repair protein MutS, found in Desulfitobacterium hafniense (strain Y51).